The following is a 304-amino-acid chain: MAAFSVHILGCGSALPTTHHHPSSQVIDLRDKLYMIDCGEGVQRQFRHEKLHFGRLIHIFISHLHGDHCFGLPGFISTLGLLGRTGTLHVHGPEGIERFLSPILEQFCHRMPYQVEIHTIDASRHALVHEDKSVKVYSIPLSHRIPAVGYLFEEKCRARHLNKAAAEFYNIPLAEYPLIIEGSDYTTPDGRIIPNRHLTTPGTPPRRYAYCSDTEFCPSIVPIIQGVDLLYHEATFMEEDWARAKETFHSTAKEAAEIARQAGAKRLLIGHYSGRYKDVQGLLEEAQSVFKPTIAANERMRIDL.

Zn(2+) contacts are provided by histidine 63, histidine 65, aspartate 67, histidine 68, histidine 143, aspartate 213, and histidine 271. Residue aspartate 67 is the Proton acceptor of the active site.

It belongs to the RNase Z family. As to quaternary structure, homodimer. Zn(2+) serves as cofactor.

It catalyses the reaction Endonucleolytic cleavage of RNA, removing extra 3' nucleotides from tRNA precursor, generating 3' termini of tRNAs. A 3'-hydroxy group is left at the tRNA terminus and a 5'-phosphoryl group is left at the trailer molecule.. Its function is as follows. Zinc phosphodiesterase, which displays some tRNA 3'-processing endonuclease activity. Probably involved in tRNA maturation, by removing a 3'-trailer from precursor tRNA. This is Ribonuclease Z from Porphyromonas gingivalis (strain ATCC 33277 / DSM 20709 / CIP 103683 / JCM 12257 / NCTC 11834 / 2561).